The following is a 305-amino-acid chain: UDP-3-O-acyl-N-acetylglucosamine deacetylase (305 aa).

Zn(2+)-binding residues include His78, His237, and Asp241. His264 acts as the Proton donor in catalysis.

Belongs to the LpxC family. It depends on Zn(2+) as a cofactor.

The catalysed reaction is a UDP-3-O-[(3R)-3-hydroxyacyl]-N-acetyl-alpha-D-glucosamine + H2O = a UDP-3-O-[(3R)-3-hydroxyacyl]-alpha-D-glucosamine + acetate. It functions in the pathway glycolipid biosynthesis; lipid IV(A) biosynthesis; lipid IV(A) from (3R)-3-hydroxytetradecanoyl-[acyl-carrier-protein] and UDP-N-acetyl-alpha-D-glucosamine: step 2/6. Its function is as follows. Catalyzes the hydrolysis of UDP-3-O-myristoyl-N-acetylglucosamine to form UDP-3-O-myristoylglucosamine and acetate, the committed step in lipid A biosynthesis. The polypeptide is UDP-3-O-acyl-N-acetylglucosamine deacetylase (Burkholderia mallei (strain NCTC 10247)).